The chain runs to 51 residues: Large ribosomal subunit protein eL39 (51 aa).

The protein belongs to the eukaryotic ribosomal protein eL39 family.

This is Large ribosomal subunit protein eL39 (rpl39e) from Methanothermobacter thermautotrophicus (strain ATCC 29096 / DSM 1053 / JCM 10044 / NBRC 100330 / Delta H) (Methanobacterium thermoautotrophicum).